The chain runs to 602 residues: Glutamine--fructose-6-phosphate aminotransferase [isomerizing] (602 aa).

Residue cysteine 2 is the Nucleophile; for GATase activity of the active site. The Glutamine amidotransferase type-2 domain maps to cysteine 2–aspartate 217. The interval isoleucine 67–arginine 87 is disordered. Positions lysine 77–arginine 87 are enriched in basic and acidic residues. SIS domains follow at residues isoleucine 283–asparagine 422 and valine 455–proline 592. The active-site For Fru-6P isomerization activity is lysine 597.

Homodimer.

It localises to the cytoplasm. The enzyme catalyses D-fructose 6-phosphate + L-glutamine = D-glucosamine 6-phosphate + L-glutamate. Its function is as follows. Catalyzes the first step in hexosamine metabolism, converting fructose-6P into glucosamine-6P using glutamine as a nitrogen source. In Streptococcus pneumoniae (strain ATCC BAA-255 / R6), this protein is Glutamine--fructose-6-phosphate aminotransferase [isomerizing].